We begin with the raw amino-acid sequence, 198 residues long: Glutamyl-tRNA(Gln) amidotransferase subunit C, mitochondrial (198 aa).

Belongs to the GatC family. In terms of assembly, subunit of the heterotrimeric GatCAB amidotransferase (AdT) complex, composed of A, B and C subunits.

Its subcellular location is the mitochondrion. The enzyme catalyses L-glutamyl-tRNA(Gln) + L-glutamine + ATP + H2O = L-glutaminyl-tRNA(Gln) + L-glutamate + ADP + phosphate + H(+). Functionally, allows the formation of correctly charged Gln-tRNA(Gln) through the transamidation of misacylated Glu-tRNA(Gln) in the mitochondria. The reaction takes place in the presence of glutamine and ATP through an activated gamma-phospho-Glu-tRNA(Gln). The protein is Glutamyl-tRNA(Gln) amidotransferase subunit C, mitochondrial of Caenorhabditis remanei (Caenorhabditis vulgaris).